A 505-amino-acid chain; its full sequence is Trans-cinnamate 4-monooxygenase (505 aa).

The helical transmembrane segment at 3–23 threads the bilayer; that stretch reads LLLLEKTLLGLFAAIIVASIV. (E)-cinnamate is bound by residues 213–218 and Ala306; that span reads RSRLAQ. Cys447 is a binding site for heme.

The protein belongs to the cytochrome P450 family. It depends on heme as a cofactor.

Its subcellular location is the membrane. It carries out the reaction (E)-cinnamate + reduced [NADPH--hemoprotein reductase] + O2 = (E)-4-coumarate + oxidized [NADPH--hemoprotein reductase] + H2O + H(+). The protein operates within phenylpropanoid metabolism; trans-4-coumarate biosynthesis; trans-4-coumarate from trans-cinnamate: step 1/1. In terms of biological role, catalyzes the first oxidative step of the phenylpropanoid pathway in higher plants by transforming trans-cinnamate into p-coumarate. The compounds formed by this pathway are essential components for lignification, pollination, and defense against ultraviolet light, predators and pathogens. The protein is Trans-cinnamate 4-monooxygenase (CYP73A4) of Catharanthus roseus (Madagascar periwinkle).